Here is a 313-residue protein sequence, read N- to C-terminus: Nematocyst expressed protein 8 (313 aa).

Positions 1 to 19 (MLRRPLLLVLFTVFSTLYA) are cleaved as a signal peptide. Residues 24–56 (GVSPPTNESEAEVSPGDDEGPPEPGNEPDVNWR) are disordered. Over residues 32 to 44 (SEAEVSPGDDEGP) the composition is skewed to acidic residues. ShKT domains lie at 65 to 99 (CKDK…CRFC), 109 to 145 (CKDL…CELC), and 151 to 186 (FKYT…CRKY). Intrachain disulfides connect Cys-65–Cys-99, Cys-72–Cys-92, Cys-81–Cys-96, Cys-109–Cys-145, Cys-127–Cys-142, Cys-160–Cys-179, and Cys-169–Cys-183. Residues 222-244 (TAAPSTQPAETTKAPPNTAAPTA) are compositionally biased toward low complexity. The disordered stretch occupies residues 222 to 313 (TAAPSTQPAE…LCDEKHSSQQ (92 aa)). A compositionally biased stretch (pro residues) spans 245–265 (APTPAPTPAPAPAPTPAPVAP). A compositionally biased stretch (acidic residues) spans 280–297 (TPEEQDDNSADESTEIEA).

This sequence belongs to the NEP3 family. As to expression, nematocytes. In late planulae, is only expressed in a handful of nematocytes in the lower pharynx. Is absent from the tentacles and outer body wall.

It localises to the nematocyst. The protein resides in the secreted. Functionally, probable toxin probably only used for predation. The protein is Nematocyst expressed protein 8 of Nematostella vectensis (Starlet sea anemone).